Consider the following 179-residue polypeptide: Transcriptional regulator ICP22 homolog (179 aa).

A compositionally biased stretch (basic and acidic residues) spans M1 to T12. The interval M1–S40 is disordered.

It belongs to the herpesviridae ICP22 family.

This is Transcriptional regulator ICP22 homolog (MDV088) from Gallid herpesvirus 2 (strain Chicken/Md5/ATCC VR-987) (GaHV-2).